Consider the following 1242-residue polypeptide: DNA excision repair protein ERCC-6-like (1242 aa).

Ser14 is subject to Phosphoserine. Residues 21-54 (YLRYVKEAKEATKNGDLEQALKLFNLAKDIFPNE) form a TPR 1 repeat. The Helicase ATP-binding domain occupies 109–277 (SLYRDGRRGG…WSLFDFACQG (169 aa)). 122-129 (DDMGLGKT) provides a ligand contact to ATP. Residues 228 to 231 (DEAH) carry the DEAH box motif. The Helicase C-terminal domain maps to 466-626 (FLMDLLKKLR…PFRYFSKQEL (161 aa)). Phosphoserine is present on residues Ser755 and Ser773. The residue at position 815 (Thr815) is a Phosphothreonine. Ser963, Ser989, Ser998, and Ser1021 each carry phosphoserine. Thr1055 carries the phosphothreonine modification. Phosphoserine is present on residues Ser1061, Ser1090, and Ser1110. Residues 1103 to 1181 (EERLDNSSEA…LSDGQLVDSP (79 aa)) form a disordered region. 2 stretches are compositionally biased toward basic and acidic residues: residues 1105–1121 (RLDN…HLEE) and 1130–1140 (APEHTKEDPSR). Positions 1141-1156 (ETLSSENKSSQLSTSK) are enriched in polar residues. A phosphoserine mark is found at Ser1173 and Ser1180. One copy of the TPR 2 repeat lies at 1192–1225 (YDTLVLHGKELKECGKIQEALDCLVKALDIKSSD).

Belongs to the SNF2/RAD54 helicase family. As to quaternary structure, interacts with PLK1, which phosphorylates it. Both proteins are mutually dependent on each other for correct subcellular localization. Interacts (via N-terminal TPR repeat) with BEND3 (via BEN domains 1 and 3); the interaction is direct. In terms of processing, phosphorylation by PLK1 prevents the association with chromosome arms and restricts its localization to the kinetochore-centromere region.

The protein resides in the chromosome. It is found in the centromere. Its subcellular location is the kinetochore. It carries out the reaction ATP + H2O = ADP + phosphate + H(+). DNA helicase that acts as a tension sensor that associates with catenated DNA which is stretched under tension until it is resolved during anaphase. Functions as ATP-dependent DNA translocase. Can promote Holliday junction branch migration (in vitro). This Bos taurus (Bovine) protein is DNA excision repair protein ERCC-6-like (ERCC6L).